The following is a 500-amino-acid chain: Protein nucleotidyltransferase YdiU (500 aa).

The ATP site is built by glycine 96, glycine 98, arginine 99, lysine 119, aspartate 131, glycine 132, arginine 182, and arginine 189. The active-site Proton acceptor is the aspartate 258. Asparagine 259 and aspartate 268 together coordinate Mg(2+). An ATP-binding site is contributed by aspartate 268.

This sequence belongs to the SELO family. Mg(2+) is required as a cofactor. Requires Mn(2+) as cofactor.

The enzyme catalyses L-seryl-[protein] + ATP = 3-O-(5'-adenylyl)-L-seryl-[protein] + diphosphate. The catalysed reaction is L-threonyl-[protein] + ATP = 3-O-(5'-adenylyl)-L-threonyl-[protein] + diphosphate. It carries out the reaction L-tyrosyl-[protein] + ATP = O-(5'-adenylyl)-L-tyrosyl-[protein] + diphosphate. It catalyses the reaction L-histidyl-[protein] + UTP = N(tele)-(5'-uridylyl)-L-histidyl-[protein] + diphosphate. The enzyme catalyses L-seryl-[protein] + UTP = O-(5'-uridylyl)-L-seryl-[protein] + diphosphate. The catalysed reaction is L-tyrosyl-[protein] + UTP = O-(5'-uridylyl)-L-tyrosyl-[protein] + diphosphate. In terms of biological role, nucleotidyltransferase involved in the post-translational modification of proteins. It can catalyze the addition of adenosine monophosphate (AMP) or uridine monophosphate (UMP) to a protein, resulting in modifications known as AMPylation and UMPylation. In Rhizobium johnstonii (strain DSM 114642 / LMG 32736 / 3841) (Rhizobium leguminosarum bv. viciae), this protein is Protein nucleotidyltransferase YdiU.